Reading from the N-terminus, the 475-residue chain is Ribulose bisphosphate carboxylase large chain (475 aa).

Residues 1–2 (MS) constitute a propeptide that is removed on maturation. Pro-3 carries the post-translational modification N-acetylproline. Residue Lys-14 is modified to N6,N6,N6-trimethyllysine. Substrate-binding residues include Asn-123 and Thr-173. The active-site Proton acceptor is Lys-175. Lys-177 serves as a coordination point for substrate. Mg(2+) is bound by residues Lys-201, Asp-203, and Glu-204. At Lys-201 the chain carries N6-carboxylysine. His-294 (proton acceptor) is an active-site residue. Residues Arg-295, His-327, and Ser-379 each coordinate substrate.

It belongs to the RuBisCO large chain family. Type I subfamily. As to quaternary structure, heterohexadecamer of 8 large chains and 8 small chains; disulfide-linked. The disulfide link is formed within the large subunit homodimers. Requires Mg(2+) as cofactor. The disulfide bond which can form in the large chain dimeric partners within the hexadecamer appears to be associated with oxidative stress and protein turnover.

Its subcellular location is the plastid. It localises to the chloroplast. The enzyme catalyses 2 (2R)-3-phosphoglycerate + 2 H(+) = D-ribulose 1,5-bisphosphate + CO2 + H2O. It carries out the reaction D-ribulose 1,5-bisphosphate + O2 = 2-phosphoglycolate + (2R)-3-phosphoglycerate + 2 H(+). RuBisCO catalyzes two reactions: the carboxylation of D-ribulose 1,5-bisphosphate, the primary event in carbon dioxide fixation, as well as the oxidative fragmentation of the pentose substrate in the photorespiration process. Both reactions occur simultaneously and in competition at the same active site. The polypeptide is Ribulose bisphosphate carboxylase large chain (Chloranthus spicatus (Chulantree)).